The sequence spans 381 residues: Alcohol dehydrogenase-like 6 (381 aa).

8 residues coordinate Zn(2+): cysteine 53, serine 55, histidine 72, cysteine 102, cysteine 105, cysteine 108, cysteine 116, and cysteine 179. Serine 55 and histidine 72 together coordinate an alcohol. Serine 55 serves as a coordination point for NAD(+). Residues 204-209 (GLGTVG), aspartate 228, lysine 233, 297-299 (LGV), phenylalanine 324, and arginine 374 contribute to the NAD(+) site.

This sequence belongs to the zinc-containing alcohol dehydrogenase family. Class-III subfamily. As to quaternary structure, homodimer. Zn(2+) serves as cofactor.

It localises to the cytoplasm. It carries out the reaction a primary alcohol + NAD(+) = an aldehyde + NADH + H(+). The catalysed reaction is a secondary alcohol + NAD(+) = a ketone + NADH + H(+). The protein is Alcohol dehydrogenase-like 6 of Arabidopsis thaliana (Mouse-ear cress).